We begin with the raw amino-acid sequence, 427 residues long: Glutamate-1-semialdehyde 2,1-aminomutase 1 (427 aa).

Lys265 carries the N6-(pyridoxal phosphate)lysine modification.

It belongs to the class-III pyridoxal-phosphate-dependent aminotransferase family. HemL subfamily. Homodimer. The cofactor is pyridoxal 5'-phosphate.

It is found in the cytoplasm. It carries out the reaction (S)-4-amino-5-oxopentanoate = 5-aminolevulinate. It functions in the pathway porphyrin-containing compound metabolism; protoporphyrin-IX biosynthesis; 5-aminolevulinate from L-glutamyl-tRNA(Glu): step 2/2. This Lachnoclostridium phytofermentans (strain ATCC 700394 / DSM 18823 / ISDg) (Clostridium phytofermentans) protein is Glutamate-1-semialdehyde 2,1-aminomutase 1.